Reading from the N-terminus, the 174-residue chain is Frataxin homolog, mitochondrial (174 aa).

A mitochondrion-targeting transit peptide spans 1-21 (MIKRSLASLVRVSSVMGRRYM).

This sequence belongs to the frataxin family. In terms of assembly, monomer. Forms a 24-mer complex made up of 8 copies of a trimeric subcomplex. Increments in mitochondrial iron uptake induce stepwise assembly of species ranging from trimers to 24-mers. Interacts with ISU1 with a 1 to 1 stoichiometry; the interaction is direct. Interacts with YHB1, SDH1, SDH2, AIM45 and CIR1. Processed in two steps by mitochondrial processing peptidase (MPP). MPP first cleaves the precursor to intermediate form and subsequently converts the intermediate to mature size protein.

The protein resides in the mitochondrion matrix. The catalysed reaction is 4 Fe(2+) + O2 + 4 H(+) = 4 Fe(3+) + 2 H2O. Promotes the biosynthesis of heme as well as the assembly and repair of iron-sulfur clusters by delivering Fe(2+) to proteins involved in these pathways. Plays a role in the protection against iron-catalyzed oxidative stress through its ability to catalyze the oxidation of Fe(2+) to Fe(3+). Can store large amounts of the metal in the form of a ferrihydrite mineral by oligomerization. May be involved in regulation of the mitochondrial electron transport chain. This chain is Frataxin homolog, mitochondrial, found in Saccharomyces cerevisiae (strain ATCC 204508 / S288c) (Baker's yeast).